The chain runs to 236 residues: tRNA1(Val) (adenine(37)-N6)-methyltransferase (236 aa).

Belongs to the methyltransferase superfamily. tRNA (adenine-N(6)-)-methyltransferase family.

The protein resides in the cytoplasm. The enzyme catalyses adenosine(37) in tRNA1(Val) + S-adenosyl-L-methionine = N(6)-methyladenosine(37) in tRNA1(Val) + S-adenosyl-L-homocysteine + H(+). In terms of biological role, specifically methylates the adenine in position 37 of tRNA(1)(Val) (anticodon cmo5UAC). The polypeptide is tRNA1(Val) (adenine(37)-N6)-methyltransferase (Aeromonas hydrophila subsp. hydrophila (strain ATCC 7966 / DSM 30187 / BCRC 13018 / CCUG 14551 / JCM 1027 / KCTC 2358 / NCIMB 9240 / NCTC 8049)).